Consider the following 150-residue polypeptide: Large ribosomal subunit protein uL15 (150 aa).

Residues 1-52 (MDLSNLKPAEGSVRKNSKRIGRGEGSGKGGTATRGHKGAKSRSGYSKKIGFE) form a disordered region. Over residues 23–32 (GEGSGKGGTA) the composition is skewed to gly residues.

It belongs to the universal ribosomal protein uL15 family. Part of the 50S ribosomal subunit.

Binds to the 23S rRNA. This is Large ribosomal subunit protein uL15 from Christiangramia forsetii (strain DSM 17595 / CGMCC 1.15422 / KT0803) (Gramella forsetii).